Reading from the N-terminus, the 239-residue chain is tRNA (guanine-N(7)-)-methyltransferase (239 aa).

Residues Glu-68, Glu-93, Asp-120, and Asp-143 each coordinate S-adenosyl-L-methionine. Asp-143 is a catalytic residue. Substrate is bound by residues Lys-147, Asp-180, and 217-220 (TKFE).

Belongs to the class I-like SAM-binding methyltransferase superfamily. TrmB family.

It carries out the reaction guanosine(46) in tRNA + S-adenosyl-L-methionine = N(7)-methylguanosine(46) in tRNA + S-adenosyl-L-homocysteine. It participates in tRNA modification; N(7)-methylguanine-tRNA biosynthesis. Functionally, catalyzes the formation of N(7)-methylguanine at position 46 (m7G46) in tRNA. In Vibrio vulnificus (strain CMCP6), this protein is tRNA (guanine-N(7)-)-methyltransferase.